The chain runs to 702 residues: BRCA1-associated RING domain protein 1 (702 aa).

An RING-type zinc finger spans residues 18-67 (CVKCKKPRGDLQYLGSSCKHAYCWECIATFQQKPSGKRSSVARHMCPSCA). Disordered regions lie at residues 153-205 (DENR…TSVK) and 281-346 (ASMS…YGTR). Over residues 174-188 (ASPTRNSTKRPSTVS) the composition is skewed to polar residues. Basic and acidic residues predominate over residues 312 to 321 (IKSDKIERRS). ANK repeat units follow at residues 347-376 (RGEA…CVNE), 379-408 (DGKT…VINA), and 413-442 (TLET…SIKI). The BRCT domain maps to 601-702 (MQPKLFAGCK…LGCSITTPPH (102 aa)).

Heterodimer (via RING-type zinc finger) with brc-1 to form the core CeBCD complex. Brc-1-brd-1 heterodimer-containing CeBCD complexes bound to chromatin are activated as an E3-ubiquitin ligase in response to DNA damage. The heterodimer interacts with the recombinase rad-51 following ionizing irradiation; the interaction is direct. The heterodimer interacts the E2-ubiquitin-conjugating enzyme let-70 following ionizing irradiation. The heterodimer interacts with the pro-crossover proteins msh-5 and syp-3. Interacts with smt-3, tac-1 and ubc-9. Post-translationally, autoubiquitinated. Phosphorylation of CeBCD complexes is required for E3 ubiquitin-protein ligase activity.

It localises to the cytoplasm. The protein resides in the nucleus. Its subcellular location is the chromosome. The catalysed reaction is S-ubiquitinyl-[E2 ubiquitin-conjugating enzyme]-L-cysteine + [acceptor protein]-L-lysine = [E2 ubiquitin-conjugating enzyme]-L-cysteine + N(6)-ubiquitinyl-[acceptor protein]-L-lysine.. The protein operates within protein modification; protein ubiquitination. With respect to regulation, E3 ubiquitin-protein ligase activity of CeBCD complexes occurs at DNA damage sites. Following DNA damage, E3 ubiquitin-protein ligase activity is reduced by caffeine treatment (inhibitor of ATM and ATK kinase activity). In terms of biological role, constituent of the CeBCD complex that possesses E3 ubiquitin-protein ligase activity. When bound to chromatin, the brc-1-brd-1 heterodimer within the CeBCD complex is inactive during normal conditions, but in response to DNA damage, the brc-1-brd-1 heterodimer associates with other proteins such as the recombinase rad-51 or the E2-ubiquitin-conjugating enzyme let-70, which activate the CeBCD complex as an E3-ubiquitin ligase. Moreover, association between the brc-1-brd-1 heterodimer and rad-51 and let-70, probably requires DNA checkpoint proteins such as atl-1 and mre-11 in order to induce ubiquitination at DNA damage sites. To this end, the brc-1-brd-1 heterodimer coordinates a diverse range of cellular pathways such as DNA damage repair, ubiquitination and transcriptional regulation to maintain genomic stability. Plays a role in triggering cellular responses at damage sites in response to DNA damage that may be induced by ionizing radiation for example. In particular, protects against chromosome non-disjunction and nuclear fragmentation during meiotic double-strand break repair to ensure sister chromatid recombination and aid chromosome stability. In Caenorhabditis elegans, this protein is BRCA1-associated RING domain protein 1.